The sequence spans 880 residues: DNA mismatch repair protein MutS (880 aa).

624-631 is an ATP binding site; it reads GPNMAGKS.

Belongs to the DNA mismatch repair MutS family.

Its function is as follows. This protein is involved in the repair of mismatches in DNA. It is possible that it carries out the mismatch recognition step. This protein has a weak ATPase activity. This Alkaliphilus metalliredigens (strain QYMF) protein is DNA mismatch repair protein MutS.